Consider the following 323-residue polypeptide: Ferrochelatase (323 aa).

The Fe cation site is built by His-195 and Glu-276.

This sequence belongs to the ferrochelatase family.

It is found in the cytoplasm. The enzyme catalyses heme b + 2 H(+) = protoporphyrin IX + Fe(2+). Its pathway is porphyrin-containing compound metabolism; protoheme biosynthesis; protoheme from protoporphyrin-IX: step 1/1. Functionally, catalyzes the ferrous insertion into protoporphyrin IX. In Mannheimia succiniciproducens (strain KCTC 0769BP / MBEL55E), this protein is Ferrochelatase.